The sequence spans 689 residues: Elongation factor G (689 aa).

The tr-type G domain maps to 8 to 282 (LNTRNIGIMA…AVVDYLPSPI (275 aa)). GTP contacts are provided by residues 17–24 (AHIDAGKT), 81–85 (DTPGH), and 135–138 (NKMD).

This sequence belongs to the TRAFAC class translation factor GTPase superfamily. Classic translation factor GTPase family. EF-G/EF-2 subfamily.

It is found in the cytoplasm. Its function is as follows. Catalyzes the GTP-dependent ribosomal translocation step during translation elongation. During this step, the ribosome changes from the pre-translocational (PRE) to the post-translocational (POST) state as the newly formed A-site-bound peptidyl-tRNA and P-site-bound deacylated tRNA move to the P and E sites, respectively. Catalyzes the coordinated movement of the two tRNA molecules, the mRNA and conformational changes in the ribosome. This Mycoplasma capricolum subsp. capricolum (strain California kid / ATCC 27343 / NCTC 10154) protein is Elongation factor G.